Consider the following 231-residue polypeptide: UPF0758 protein YsxA (231 aa).

The region spanning 109 to 231 (VIRSPEDGAN…FVSLKEKGYL (123 aa)) is the MPN domain. Residues histidine 180, histidine 182, and aspartate 193 each contribute to the Zn(2+) site. The JAMM motif motif lies at 180-193 (HNHPSGDPTPSRED).

Belongs to the UPF0758 family.

The chain is UPF0758 protein YsxA (ysxA) from Bacillus subtilis (strain 168).